Here is an 860-residue protein sequence, read N- to C-terminus: Protein MCM10 homolog (860 aa).

The N-terminal domain stretch occupies residues 1–145 (MEVDADLELL…PKKSPENKMV (145 aa)). Positions 18–225 (EAAERNGVVS…GQSTATQPIT (208 aa)) are disordered. Composition is skewed to acidic residues over residues 32 to 46 (SELD…GDED) and 64 to 84 (VEED…EEAA). Residues 93-131 (SSVCQEKSKDELEDELRKMQAQMKKLQEQLQKTALAKTS) adopt a coiled-coil conformation. Over residues 98–110 (EKSKDELEDELRK) the composition is skewed to basic and acidic residues. Composition is skewed to polar residues over residues 120–134 (EQLQ…SSPG), 144–154 (MVQSGKTSRTS), 164–175 (SNTVAPQLTSPT), and 214–225 (RPGQSTATQPIT). An OB-fold domain region spans residues 230 to 380 (SPVGQQYHVE…LMGDAVDLGT (151 aa)). The segment at 381–406 (CKARKKNGDPCTQMVNLNDCEYCQYH) is zinc finger-like 1. Disordered stretches follow at residues 553 to 591 (QQKQ…SSAC) and 657 to 700 (QTLA…NEPA). A compositionally biased stretch (basic and acidic residues) spans 565–582 (RAEESQKRFLESTEKSEK). Residues 596-860 (SPKQGAEFPN…EHGKFLNSLK (265 aa)) are C-terminal domain. Zinc finger-like regions lie at residues 768 to 787 (CKTC…SENH) and 801 to 821 (CPCG…CSTC).

It belongs to the MCM10 family. In terms of assembly, self-associates.

The protein localises to the nucleus. Functionally, acts as a replication initiation factor that brings together the MCM2-7 helicase and the DNA polymerase alpha/primase complex in order to initiate DNA replication. Additionally, plays a role in preventing DNA damage during replication. This is Protein MCM10 homolog (mcm10) from Xenopus laevis (African clawed frog).